We begin with the raw amino-acid sequence, 166 residues long: Antibacterial peptide PMAP-36 (166 aa).

An N-terminal signal peptide occupies residues 1–29 (METQRASLCLGRWSLWLLLLGLVVPSASA). The propeptide occupies 30–129 (QALSYREAVL…LDINCDEIQS (100 aa)). Intrachain disulfides connect cysteine 85–cysteine 96 and cysteine 107–cysteine 124.

Belongs to the cathelicidin family.

The protein resides in the secreted. Its function is as follows. Exerts antimicrobial activity against both Gram-positive and negative bacteria. Its activity appears to be mediated by its ability to damage bacterial membranes. The sequence is that of Antibacterial peptide PMAP-36 (PMAP36) from Sus scrofa (Pig).